Reading from the N-terminus, the 189-residue chain is HGPRTase-like protein (189 aa).

It belongs to the purine/pyrimidine phosphoribosyltransferase family. Archaeal HPRT subfamily.

May catalyze a purine salvage reaction, the substrate is unknown. The chain is HGPRTase-like protein from Halorhabdus utahensis (strain DSM 12940 / JCM 11049 / AX-2).